Reading from the N-terminus, the 105-residue chain is Small ribosomal subunit protein uS10 (105 aa).

The protein belongs to the universal ribosomal protein uS10 family. As to quaternary structure, part of the 30S ribosomal subunit.

In terms of biological role, involved in the binding of tRNA to the ribosomes. This is Small ribosomal subunit protein uS10 from Desulfovibrio desulfuricans (strain ATCC 27774 / DSM 6949 / MB).